The primary structure comprises 710 residues: E3 ubiquitin-protein ligase TRIM9 (710 aa).

The segment at 10-50 adopts an RING-type zinc-finger fold; sequence CPVCGSFYREPIILPCSHNLCQACARNILVQTPESESPQSR. Residue Thr-41 is modified to Phosphothreonine. A phosphoserine mark is found at Ser-44, Ser-46, Ser-49, and Ser-53. 2 consecutive B box-type zinc fingers follow at residues 163–212 and 224–266; these read AAAL…LVPP and RKVS…VKAL. Zn(2+) contacts are provided by Cys-168, Cys-171, Cys-193, His-198, Cys-229, His-232, Cys-252, and His-258. A coiled-coil region spans residues 273–340; that stretch reads HKSQLSQALN…KAQLLARVNK (68 aa). Positions 374 to 432 constitute a COS domain; sequence IKENDPSGFLQISDALIRRVHLTEDQWGKGTLTPRMTTDFDLSLDNSPLLQSIHQLDFV. The Fibronectin type-III domain maps to 440–535; that stretch reads VPATPILQLE…KTLVLQTSEV (96 aa). One can recognise a B30.2/SPRY domain in the interval 533–702; sequence SEVAWFAFDP…LHTGLPVPDF (170 aa).

Interacts with SNAP25. In terms of processing, auto-ubiquitinated. As to expression, brain (at protein level). Expressed in fetal and adult brain.

Its subcellular location is the cytoplasmic vesicle. The protein localises to the secretory vesicle. It is found in the synaptic vesicle. It localises to the synapse. The protein resides in the cytoplasm. Its subcellular location is the cytoskeleton. The protein localises to the cell projection. It is found in the dendrite. The catalysed reaction is S-ubiquitinyl-[E2 ubiquitin-conjugating enzyme]-L-cysteine + [acceptor protein]-L-lysine = [E2 ubiquitin-conjugating enzyme]-L-cysteine + N(6)-ubiquitinyl-[acceptor protein]-L-lysine.. It participates in protein modification; protein ubiquitination. In terms of biological role, E3 ubiquitin-protein ligase which ubiquitinates itself in cooperation with an E2 enzyme UBE2D2/UBC4 and serves as a targeting signal for proteasomal degradation. May play a role in regulation of neuronal functions. May act as a regulator of synaptic vesicle exocytosis by controlling the availability of SNAP25 for the SNARE complex formation. The sequence is that of E3 ubiquitin-protein ligase TRIM9 (Trim9) from Rattus norvegicus (Rat).